A 399-amino-acid polypeptide reads, in one-letter code: Polypyrimidine tract-binding protein homolog 1 (399 aa).

Ser2 is modified (N-acetylserine). 3 consecutive RRM domains span residues 17 to 95 (KVVH…YSNR), 109 to 196 (GNVL…YSAH), and 242 to 322 (SNVL…YSRH). A disordered region spans residues 352–399 (AVSGSAPPAGWQNPQAQSQYSGYGGSPYMYPSSDPNGASPSGQPPYYG). A compositionally biased stretch (low complexity) spans 365-384 (PQAQSQYSGYGGSPYMYPSS).

It is found in the nucleus. Plays a role in pre-mRNA splicing. Binds to the polypyrimidine tract of introns. May promote the binding of U2 snRNP to pre-mRNA. This is Polypyrimidine tract-binding protein homolog 1 (PTB) from Arabidopsis thaliana (Mouse-ear cress).